The chain runs to 53 residues: MPQMAPISWLLLFIIFSITFILFCSINYYSYMPNSPKSNELKNINLNSMNWKW.

Residues 4 to 24 (MAPISWLLLFIIFSITFILFC) traverse the membrane as a helical segment.

This sequence belongs to the ATPase protein 8 family. As to quaternary structure, F-type ATPases have 2 components, CF(1) - the catalytic core - and CF(0) - the membrane proton channel.

Its subcellular location is the mitochondrion membrane. Mitochondrial membrane ATP synthase (F(1)F(0) ATP synthase or Complex V) produces ATP from ADP in the presence of a proton gradient across the membrane which is generated by electron transport complexes of the respiratory chain. F-type ATPases consist of two structural domains, F(1) - containing the extramembraneous catalytic core and F(0) - containing the membrane proton channel, linked together by a central stalk and a peripheral stalk. During catalysis, ATP synthesis in the catalytic domain of F(1) is coupled via a rotary mechanism of the central stalk subunits to proton translocation. Part of the complex F(0) domain. Minor subunit located with subunit a in the membrane. This is ATP synthase protein 8 (mt:ATPase8) from Drosophila mauritiana (Fruit fly).